The sequence spans 571 residues: Proline--tRNA ligase (571 aa).

It belongs to the class-II aminoacyl-tRNA synthetase family. ProS type 1 subfamily. As to quaternary structure, homodimer.

It is found in the cytoplasm. The catalysed reaction is tRNA(Pro) + L-proline + ATP = L-prolyl-tRNA(Pro) + AMP + diphosphate. Its function is as follows. Catalyzes the attachment of proline to tRNA(Pro) in a two-step reaction: proline is first activated by ATP to form Pro-AMP and then transferred to the acceptor end of tRNA(Pro). As ProRS can inadvertently accommodate and process non-cognate amino acids such as alanine and cysteine, to avoid such errors it has two additional distinct editing activities against alanine. One activity is designated as 'pretransfer' editing and involves the tRNA(Pro)-independent hydrolysis of activated Ala-AMP. The other activity is designated 'posttransfer' editing and involves deacylation of mischarged Ala-tRNA(Pro). The misacylated Cys-tRNA(Pro) is not edited by ProRS. The chain is Proline--tRNA ligase from Actinobacillus succinogenes (strain ATCC 55618 / DSM 22257 / CCUG 43843 / 130Z).